Reading from the N-terminus, the 311-residue chain is Acetyl-coenzyme A carboxylase carboxyl transferase subunit beta (311 aa).

The region spanning 27 to 296 (LWTKCGHCSA…AEAADAPEAG (270 aa)) is the CoA carboxyltransferase N-terminal domain. Residues cysteine 31, cysteine 34, cysteine 50, and cysteine 53 each coordinate Zn(2+). Residues 31–53 (CGHCSAVLYRPELERNQEVCPKC) form a C4-type zinc finger. Low complexity predominate over residues 286–299 (AAEAADAPEAGEQP). The tract at residues 286 to 311 (AAEAADAPEAGEQPSEATDPVGEHWD) is disordered.

This sequence belongs to the AccD/PCCB family. Acetyl-CoA carboxylase is a heterohexamer composed of biotin carboxyl carrier protein (AccB), biotin carboxylase (AccC) and two subunits each of ACCase subunit alpha (AccA) and ACCase subunit beta (AccD). Requires Zn(2+) as cofactor.

It is found in the cytoplasm. It carries out the reaction N(6)-carboxybiotinyl-L-lysyl-[protein] + acetyl-CoA = N(6)-biotinyl-L-lysyl-[protein] + malonyl-CoA. The protein operates within lipid metabolism; malonyl-CoA biosynthesis; malonyl-CoA from acetyl-CoA: step 1/1. Component of the acetyl coenzyme A carboxylase (ACC) complex. Biotin carboxylase (BC) catalyzes the carboxylation of biotin on its carrier protein (BCCP) and then the CO(2) group is transferred by the transcarboxylase to acetyl-CoA to form malonyl-CoA. The polypeptide is Acetyl-coenzyme A carboxylase carboxyl transferase subunit beta (Alkalilimnicola ehrlichii (strain ATCC BAA-1101 / DSM 17681 / MLHE-1)).